Reading from the N-terminus, the 524-residue chain is GMP synthase [glutamine-hydrolyzing] (524 aa).

The region spanning 8–206 (RILILDFGSQ…IYDICGCEAL (199 aa)) is the Glutamine amidotransferase type-1 domain. C85 serves as the catalytic Nucleophile. Active-site residues include H180 and E182. The GMPS ATP-PPase domain occupies 207-399 (WEPRHIIAKS…LGLPFELVYR (193 aa)). 234–240 (SGGVDSS) contacts ATP.

In terms of assembly, homodimer.

The enzyme catalyses XMP + L-glutamine + ATP + H2O = GMP + L-glutamate + AMP + diphosphate + 2 H(+). It participates in purine metabolism; GMP biosynthesis; GMP from XMP (L-Gln route): step 1/1. Functionally, catalyzes the synthesis of GMP from XMP. This chain is GMP synthase [glutamine-hydrolyzing], found in Nitrosococcus oceani (strain ATCC 19707 / BCRC 17464 / JCM 30415 / NCIMB 11848 / C-107).